The chain runs to 214 residues: Phosphatidylcholine transfer protein (214 aa).

At M1 the chain carries N-acetylmethionine. The START domain maps to 1-212 (MELAAGSFSE…MARACQNYLK (212 aa)). A 1,2-diacyl-sn-glycero-3-phosphocholine is bound by residues Y72 and R78. At S139 the chain carries Phosphoserine. Q157 is a binding site for a 1,2-diacyl-sn-glycero-3-phosphocholine.

As to quaternary structure, interacts with ACOT13/THEM2. In terms of tissue distribution, highest expression in liver, placenta, testis, kidney and heart. Low levels in brain and lung. No expression detected in thymus.

It is found in the cytoplasm. Functionally, catalyzes the transfer of phosphatidylcholine between membranes. Binds a single lipid molecule. This is Phosphatidylcholine transfer protein (PCTP) from Homo sapiens (Human).